Consider the following 306-residue polypeptide: D-alanine--D-alanine ligase (306 aa).

Residues 102-300 (KIVVASVGVS…YGDIVQWMVE (199 aa)) enclose the ATP-grasp domain. 128–183 (PMEPPYVIKPVCEGSSLGVIIVKENESVPSLNVVGSEWVYADTVIVEKYIPGRELT) provides a ligand contact to ATP. Mg(2+) is bound by residues aspartate 253, glutamate 267, and asparagine 269.

The protein belongs to the D-alanine--D-alanine ligase family. The cofactor is Mg(2+). Requires Mn(2+) as cofactor.

It localises to the cytoplasm. The enzyme catalyses 2 D-alanine + ATP = D-alanyl-D-alanine + ADP + phosphate + H(+). It functions in the pathway cell wall biogenesis; peptidoglycan biosynthesis. Its function is as follows. Cell wall formation. In Bartonella henselae (strain ATCC 49882 / DSM 28221 / CCUG 30454 / Houston 1) (Rochalimaea henselae), this protein is D-alanine--D-alanine ligase.